Here is a 30-residue protein sequence, read N- to C-terminus: Dendrotoxin A (30 aa).

A disulfide bridge connects residues cysteine 3 and cysteine 22.

Belongs to the three-finger toxin family. Short-chain subfamily. Acn-esterase inhibitor sub-subfamily. Post-translationally, contains 4 disulfide bonds. As to expression, expressed by the venom gland.

Its subcellular location is the secreted. Functionally, inhibits acetylcholinesterase. Has been described to inhibit both the slowly and the rapidly inactivating phases of potassium efflux. The polypeptide is Dendrotoxin A (Dendroaspis angusticeps (Eastern green mamba)).